The following is a 132-amino-acid chain: Small ribosomal subunit protein uS8 (132 aa).

Belongs to the universal ribosomal protein uS8 family. In terms of assembly, part of the 30S ribosomal subunit. Contacts proteins S5 and S12.

Functionally, one of the primary rRNA binding proteins, it binds directly to 16S rRNA central domain where it helps coordinate assembly of the platform of the 30S subunit. This is Small ribosomal subunit protein uS8 from Streptococcus pneumoniae serotype 19F (strain G54).